The following is a 363-amino-acid chain: UDP-N-acetylglucosamine--N-acetylmuramyl-(pentapeptide) pyrophosphoryl-undecaprenol N-acetylglucosamine transferase (363 aa).

Residues 14 to 16, arginine 171, serine 200, and glutamine 290 each bind UDP-N-acetyl-alpha-D-glucosamine; that span reads TGG.

Belongs to the glycosyltransferase 28 family. MurG subfamily.

It localises to the cell inner membrane. It catalyses the reaction di-trans,octa-cis-undecaprenyl diphospho-N-acetyl-alpha-D-muramoyl-L-alanyl-D-glutamyl-meso-2,6-diaminopimeloyl-D-alanyl-D-alanine + UDP-N-acetyl-alpha-D-glucosamine = di-trans,octa-cis-undecaprenyl diphospho-[N-acetyl-alpha-D-glucosaminyl-(1-&gt;4)]-N-acetyl-alpha-D-muramoyl-L-alanyl-D-glutamyl-meso-2,6-diaminopimeloyl-D-alanyl-D-alanine + UDP + H(+). Its pathway is cell wall biogenesis; peptidoglycan biosynthesis. Cell wall formation. Catalyzes the transfer of a GlcNAc subunit on undecaprenyl-pyrophosphoryl-MurNAc-pentapeptide (lipid intermediate I) to form undecaprenyl-pyrophosphoryl-MurNAc-(pentapeptide)GlcNAc (lipid intermediate II). This is UDP-N-acetylglucosamine--N-acetylmuramyl-(pentapeptide) pyrophosphoryl-undecaprenol N-acetylglucosamine transferase from Borreliella afzelii (strain PKo) (Borrelia afzelii).